We begin with the raw amino-acid sequence, 432 residues long: Glutamate-1-semialdehyde 2,1-aminomutase (432 aa).

An N6-(pyridoxal phosphate)lysine modification is found at Lys272.

It belongs to the class-III pyridoxal-phosphate-dependent aminotransferase family. HemL subfamily. Homodimer. The cofactor is pyridoxal 5'-phosphate.

It localises to the cytoplasm. The enzyme catalyses (S)-4-amino-5-oxopentanoate = 5-aminolevulinate. Its pathway is porphyrin-containing compound metabolism; protoporphyrin-IX biosynthesis; 5-aminolevulinate from L-glutamyl-tRNA(Glu): step 2/2. It participates in porphyrin-containing compound metabolism; chlorophyll biosynthesis. The chain is Glutamate-1-semialdehyde 2,1-aminomutase from Acaryochloris marina (strain MBIC 11017).